A 235-amino-acid polypeptide reads, in one-letter code: Orotidine 5'-phosphate decarboxylase (235 aa).

Residues Asp17, Lys39, 66 to 75, Thr121, Arg182, Gln191, Gly211, and Arg212 each bind substrate; that span reads DLKLHDIGNT. Lys68 (proton donor) is an active-site residue.

It belongs to the OMP decarboxylase family. Type 1 subfamily. In terms of assembly, homodimer.

It catalyses the reaction orotidine 5'-phosphate + H(+) = UMP + CO2. Its pathway is pyrimidine metabolism; UMP biosynthesis via de novo pathway; UMP from orotate: step 2/2. In terms of biological role, catalyzes the decarboxylation of orotidine 5'-monophosphate (OMP) to uridine 5'-monophosphate (UMP). In Afipia carboxidovorans (strain ATCC 49405 / DSM 1227 / KCTC 32145 / OM5) (Oligotropha carboxidovorans), this protein is Orotidine 5'-phosphate decarboxylase.